The sequence spans 764 residues: A-type ATP synthase subunit A (764 aa).

The protein belongs to the ATPase alpha/beta chains family. Has multiple subunits with at least A(3), B(3), C, D, E, F, H, I and proteolipid K(x). This protein undergoes a protein self splicing that involves a post-translational excision of the VDE intervening region (intein) followed by peptide ligation.

The protein resides in the cell membrane. The enzyme catalyses ATP + H2O + 4 H(+)(in) = ADP + phosphate + 5 H(+)(out). Component of the A-type ATP synthase that produces ATP from ADP in the presence of a proton gradient across the membrane. The A chain is the catalytic subunit. The chain is A-type ATP synthase subunit A from Thermoplasma acidophilum (strain ATCC 25905 / DSM 1728 / JCM 9062 / NBRC 15155 / AMRC-C165).